The chain runs to 1186 residues: MYND-type zinc finger-containing chromatin reader ZMYND8 (1186 aa).

Over residues 1-12 the composition is skewed to basic and acidic residues; sequence MDISTRSKDPGS. The interval 1 to 57 is disordered; that stretch reads MDISTRSKDPGSAERTAQKRKFPSPPHSSNGHSPQDTSTSPIKKKKKPGLLNSNNKE. The required for interaction with CCNT1 stretch occupies residues 1-850; that stretch reads MDISTRSKDP…QQQQQQQNQQ (850 aa). Ser-12 participates in a covalent cross-link: Glycyl lysine isopeptide (Lys-Gly) (interchain with G-Cter in SUMO2). Residue Ser-24 is modified to Phosphoserine. Glycyl lysine isopeptide (Lys-Gly) (interchain with G-Cter in SUMO2) cross-links involve residues Lys-56 and Lys-70. The segment at 75–268 is interaction with histone H3K4me0; it reads TDPVDVVPQD…YLAACQKRDN (194 aa). The segment at 75–406 is interaction with histone H3K14ac; the sequence is TDPVDVVPQD…VKLNFDMTAS (332 aa). The segment at 88-133 adopts a PHD-type zinc-finger fold; that stretch reads DFYCWVCHREGQVLCCELCPRVYHAKCLRLTSEPEGDWFCPECEKI. Residues 88-327 are required for interaction with histone H3 and histone H4; it reads DFYCWVCHRE…INNCYLMSKE (240 aa). The Zn(2+) site is built by Cys-91, Cys-94, Cys-103, Cys-106, His-111, Cys-114, Cys-127, and Cys-130. A Bromo domain is found at 145 to 252; that stretch reads AMTMLTIEQL…KICEHEMNEI (108 aa). Zn(2+)-binding residues include Cys-255, Cys-258, and Cys-274. Positions 277–327 constitute a PWWP domain; sequence PHPLVWAKLKGFPFWPAKALRDKDGQVDARFFGQHDRAWVPINNCYLMSKE. Lys-390 participates in a covalent cross-link: Glycyl lysine isopeptide (Lys-Gly) (interchain with G-Cter in SUMO2). Thr-404 carries the phosphothreonine modification. A Phosphoserine modification is found at Ser-406. Residues 412-512 form a disordered region; it reads SKPVLSGGTG…TTKTDKTSTT (101 aa). Lys-413 is modified (N6-acetyllysine; alternate). A Glycyl lysine isopeptide (Lys-Gly) (interchain with G-Cter in SUMO2); alternate cross-link involves residue Lys-413. Residues Ser-417, Ser-425, and Ser-432 each carry the phosphoserine modification. The span at 433-442 shows a compositional bias: polar residues; it reads PMSTNSSVHT. Ser-444 is subject to Phosphoserine. Lys-453 is covalently cross-linked (Glycyl lysine isopeptide (Lys-Gly) (interchain with G-Cter in SUMO2)). Ser-460, Ser-462, Ser-465, Ser-486, Ser-490, and Ser-495 each carry phosphoserine. A compositionally biased stretch (polar residues) spans 472–489; it reads STASPASTKTGQAGSLSG. Residue Lys-505 forms a Glycyl lysine isopeptide (Lys-Gly) (interchain with G-Cter in SUMO2) linkage. Phosphoserine occurs at positions 514 and 523. Residue Lys-530 forms a Glycyl lysine isopeptide (Lys-Gly) (interchain with G-Cter in SUMO2) linkage. Residue Thr-541 is modified to Phosphothreonine. Ser-547 is subject to Phosphoserine. A Glycyl lysine isopeptide (Lys-Gly) (interchain with G-Cter in SUMO2) cross-link involves residue Lys-549. Phosphothreonine is present on Thr-563. The interval 582–884 is disordered; sequence TAVEHSDSED…ITQSPSTSTI (303 aa). 2 stretches are compositionally biased toward basic and acidic residues: residues 585–597 and 606–631; these read EHSDSEDSEKSDS and DEQKSKNEPEDTEDKEGCQMDKEPSA. Residues Lys-611 and Lys-645 each participate in a glycyl lysine isopeptide (Lys-Gly) (interchain with G-Cter in SUMO2) cross-link. Phosphoserine is present on residues Ser-652 and Ser-655. A compositionally biased stretch (basic and acidic residues) spans 656-696; the sequence is EKADPGAVKDKASPEPEKDFSEKAKPSPHPIKDKLKGKDET. A Glycyl lysine isopeptide (Lys-Gly) (interchain with G-Cter in SUMO2) cross-link involves residue Lys-657. 5 positions are modified to phosphoserine: Ser-668, Ser-682, Ser-707, Ser-709, and Ser-737. Residues 718–738 are compositionally biased toward basic and acidic residues; the sequence is GEDHSGREGRKNKKEPKEPSP. Thr-746 is modified (phosphothreonine). Residues Ser-754 and Ser-756 each carry the phosphoserine modification. Residues 766-799 are compositionally biased toward low complexity; the sequence is SSAQTSAAGATATTSTSSTVTVTAPAPAATGSPV. Positions 818–832 are enriched in polar residues; it reads VWNSSSKFQTSSQKW. Positions 835-857 are enriched in low complexity; the sequence is QKMQRQQQQQQQQNQQQQPQSSQ. The segment covering 873–884 has biased composition (polar residues); that stretch reads KEITQSPSTSTI. The interval 875-1047 is required for homodimerization; the sequence is ITQSPSTSTI…YCCWNTSYCD (173 aa). Zn(2+)-binding residues include Cys-1028, Cys-1031, Cys-1039, Cys-1040, Cys-1046, Cys-1050, His-1058, and Cys-1062. Residues 1028-1062 form an MYND-type zinc finger; it reads CANCKKEAIFYCCWNTSYCDYPCQQAHWPEHMKSC. A required for recruitment to DNA damage sites and for interaction with the NuRD complex, CHD4, HDAC1, HDAC2 and KDM1A region spans residues 1028–1062; sequence CANCKKEAIFYCCWNTSYCDYPCQQAHWPEHMKSC. The disordered stretch occupies residues 1071–1186; it reads QEADAEVNTE…KESRLDTFWD (116 aa). Low complexity predominate over residues 1085-1103; it reads SSQGSSSSTQSAPSETASA. The span at 1104–1116 shows a compositional bias: basic and acidic residues; the sequence is SKEKETSAEKSKE. Lys-1115 participates in a covalent cross-link: Glycyl lysine isopeptide (Lys-Gly) (interchain with G-Cter in SUMO2). A Phosphoserine modification is found at Ser-1119. Residues 1121–1140 show a composition bias toward polar residues; the sequence is LDLSGSRETPSSILLGSNQG. Position 1141 is a phosphoserine (Ser-1141). The interaction with PRKCB1 stretch occupies residues 1147–1186; the sequence is NKSSWSSSDEKRGSTRSDHNTSTSTKSLLPKESRLDTFWD. Composition is skewed to basic and acidic residues over residues 1154-1165 and 1175-1186; these read SDEKRGSTRSDH and LPKESRLDTFWD.

Monomer and homodimer. Interacts with NuRD subcomplexes containing GATAD2A. Interacts with the histone deacetylase NuRD complex subunit CHD4; the interaction is direct, appears to occur with monomeric ZMYND8, and is increased following DNA damage. Interacts (via N-terminus) with the P-TEFb complex subunit CCNT1 (via central region); the interaction is direct and the association appears to occur between homodimeric ZMYND8 and the activated form of the P-TEFb complex. Interacts (via N-terminus) with DBN1 (via ADF-H domain); the interaction leads to sequestering of ZMYND8 in the cytoplasm. Interacts with the P-TEFb complex subunit CDK9; the association appears to occur between homodimeric ZMYND8 and the activated form of the P-TEFb complex. Interacts with EZH2; the interaction is dependent on the presence of chromatin. Interacts (via MYND domain) with the NuRD complex subunit GATAD2A. Interacts with histone H3 (via N-terminus) that is both methylated at 'Lys-4' (H3K4me1) and acetylated at 'Lys-14' (H3K14ac), with histone H3 (via N-terminus) unmodified at 'Lys-4' (H3K4me0) and acetylated at 'Lys-14' (H3K14ac), and with histone H3 (via N-terminus) di-methylated at 'Lys-36' (H3K36me2). Interacts (via Bromo domain) with histone H4 acetylated at 'Lys-16' (H4K16ac). Interacts with HDAC1. Interacts with HDAC2. Interacts with KDM1A. Interacts with KDM5C. Interacts with KDM5D. Interacts in vitro with PRKCB. Interacts with RNA polymerase II subunit POLR2A phosphorylated at 'Ser-5'. Interacts with ZNF592. Interacts with ZNF687. Does not interact with GATAD2B. Expressed in neurons (at protein level). Absent in astrocytes (at protein level). Expressed in all tissues examined with highest expression in brain, lung, pancreas, and placenta. Expressed in cutaneous T-cell lymphomas (CTCL).

Its subcellular location is the nucleus. The protein resides in the chromosome. The protein localises to the cytoplasm. In terms of biological role, chromatin reader that recognizes dual histone modifications such as histone H3.1 dimethylated at 'Lys-36' and histone H4 acetylated at 'Lys-16' (H3.1K36me2-H4K16ac) and histone H3 methylated at 'Lys-4' and histone H4 acetylated at 'Lys-14' (H3K4me1-H3K14ac). May act as a transcriptional corepressor for KDM5D by recognizing the dual histone signature H3K4me1-H3K14ac. May also act as a transcriptional corepressor for KDM5C and EZH2. Recognizes acetylated histone H4 and recruits the NuRD chromatin remodeling complex to damaged chromatin for transcriptional repression and double-strand break repair by homologous recombination. Also activates transcription elongation by RNA polymerase II through recruiting the P-TEFb complex to target promoters. Localizes to H3.1K36me2-H4K16ac marks at all-trans-retinoic acid (ATRA)-responsive genes and positively regulates their expression. Promotes neuronal differentiation by associating with regulatory regions within the MAPT gene, to enhance transcription of a protein-coding MAPT isoform and suppress the non-coding MAPT213 isoform. Suppresses breast cancer, and prostate cancer cell invasion and metastasis. The sequence is that of MYND-type zinc finger-containing chromatin reader ZMYND8 (ZMYND8) from Homo sapiens (Human).